The primary structure comprises 596 residues: Elongation factor 4 (596 aa).

Residues 2–184 enclose the tr-type G domain; sequence KHIRNFSIIA…VIVDQIPPPE (183 aa). GTP is bound by residues 14–19 and 131–134; these read DHGKST and NKID.

The protein belongs to the TRAFAC class translation factor GTPase superfamily. Classic translation factor GTPase family. LepA subfamily.

Its subcellular location is the cell inner membrane. The enzyme catalyses GTP + H2O = GDP + phosphate + H(+). Functionally, required for accurate and efficient protein synthesis under certain stress conditions. May act as a fidelity factor of the translation reaction, by catalyzing a one-codon backward translocation of tRNAs on improperly translocated ribosomes. Back-translocation proceeds from a post-translocation (POST) complex to a pre-translocation (PRE) complex, thus giving elongation factor G a second chance to translocate the tRNAs correctly. Binds to ribosomes in a GTP-dependent manner. This Shewanella sp. (strain ANA-3) protein is Elongation factor 4.